The sequence spans 148 residues: Large ribosomal subunit protein bL9 (148 aa).

The protein belongs to the bacterial ribosomal protein bL9 family.

Binds to the 23S rRNA. This is Large ribosomal subunit protein bL9 from Coprothermobacter proteolyticus (strain ATCC 35245 / DSM 5265 / OCM 4 / BT).